Consider the following 791-residue polypeptide: MKFIKRKTKLLTITIGAVAVSSILLGGIFYGTSQKSPSSFGIASIDQKENFINKDNLDYQKARPSIKDNNLKEIPKPKPQPKPEPQPTPFPDPIPTPPKKEELKKPEIKPEEPKKPEIKPEPIPKPKPQPIPQPTPPVETKPKEELLPPSPPPPKEEPKPEPDPQPQPQQIPNQSTVRKIELNGVLVDAEVEVPPPRQTFKYDQDNGLSNLNPYTNISVGKIKKVFVTDELRHKSADLVRGNLKRGDYQSLVKDLLDPNIKPEEIDSYIAMVDKSGYHAKLWSKFKKLFDTDNVVNFLNEQGKKEYPNMKTKFVSDAHKYAWLYAHLDFSKFTKLSANSEKYLQEGLTPDPDNSYVNENGELDSYAYSPAKEYNTVTSRLANDNANRRVFGYNEWYNRSPNGLANGDYPGWNKSDATAEFKQYGIKDGDGIKVYKLERQKPQEGKLNTGYIVDIDADNPDGYQKTKELIQKLNNQNKKITGYRIRNMGKSDSGQKFSDILKALPNELPLLELFFSAGSHNTSALSALETKHIKELGLYTLGNSLLDEWSINPNALRKVEWINSNDYNVSSEYKQGSDIATRITFDTLSFDKNDFNDNANDLRTKLKRINDGLRMVYWTRNNEPFFQGGFGPGLDPDHKEVGNSYPQGLDFSRVPQIRSLRGLIFKDEQKASNNRERKLRRVNFFNDKENYEMSINDLNEAGFSEHIVTNEPMPPKSKITFSNGNATKRIYIKGNGSLTASGIQNLATLFNLAESLDSKSVVVDSNNSELKSQLEGLGYKVSDASDANYIDI.

Residues 10 to 30 (LLTITIGAVAVSSILLGGIFY) traverse the membrane as a helical segment. The span at 56–76 (NLDYQKARPSIKDNNLKEIPK) shows a compositional bias: basic and acidic residues. Positions 56–175 (NLDYQKARPS…PQPQQIPNQS (120 aa)) are disordered. Over residues 77–97 (PKPQPKPEPQPTPFPDPIPTP) the composition is skewed to pro residues. Over residues 98–124 (PKKEELKKPEIKPEEPKKPEIKPEPIP) the composition is skewed to basic and acidic residues. Over residues 125 to 139 (KPKPQPIPQPTPPVE) the composition is skewed to pro residues.

To U.parvum UU044.

It is found in the membrane. This is an uncharacterized protein from Ureaplasma parvum serovar 3 (strain ATCC 700970).